We begin with the raw amino-acid sequence, 306 residues long: UDP-N-acetylenolpyruvoylglucosamine reductase (306 aa).

The region spanning 34–198 (VGGPADLLIT…LEVTFKLHNS (165 aa)) is the FAD-binding PCMH-type domain. Residue Arg-177 is part of the active site. Ser-227 functions as the Proton donor in the catalytic mechanism. Glu-297 is an active-site residue.

The protein belongs to the MurB family. The cofactor is FAD.

Its subcellular location is the cytoplasm. The enzyme catalyses UDP-N-acetyl-alpha-D-muramate + NADP(+) = UDP-N-acetyl-3-O-(1-carboxyvinyl)-alpha-D-glucosamine + NADPH + H(+). Its pathway is cell wall biogenesis; peptidoglycan biosynthesis. Functionally, cell wall formation. The chain is UDP-N-acetylenolpyruvoylglucosamine reductase from Clostridium botulinum (strain ATCC 19397 / Type A).